The sequence spans 430 residues: Histidine--tRNA ligase (430 aa).

It belongs to the class-II aminoacyl-tRNA synthetase family. Homodimer.

It localises to the cytoplasm. The enzyme catalyses tRNA(His) + L-histidine + ATP = L-histidyl-tRNA(His) + AMP + diphosphate + H(+). This Acinetobacter baumannii (strain ACICU) protein is Histidine--tRNA ligase.